A 219-amino-acid polypeptide reads, in one-letter code: Redox-sensing transcriptional repressor Rex (219 aa).

Positions 17–56 form a DNA-binding region, H-T-H motif; sequence VYLRVLDNLVKRDIEVVSSKSLSKETGFTAEQIRKDLAFF. 91-96 serves as a coordination point for NAD(+); it reads GAGHLG.

Belongs to the transcriptional regulatory Rex family. Homodimer.

Its subcellular location is the cytoplasm. Its function is as follows. Modulates transcription in response to changes in cellular NADH/NAD(+) redox state. The sequence is that of Redox-sensing transcriptional repressor Rex from Natranaerobius thermophilus (strain ATCC BAA-1301 / DSM 18059 / JW/NM-WN-LF).